The chain runs to 141 residues: Hemoglobin subunit alpha-D (141 aa).

Residues 1–141 form the Globin domain; sequence MLSADEKQLI…VSDVLAEKYR (141 aa). The heme b site is built by H58 and H87.

Belongs to the globin family. In terms of assembly, heterotetramer of two alpha-D chains and two beta chains. In terms of tissue distribution, red blood cells.

Functionally, involved in oxygen transport from the lung to the various peripheral tissues. The polypeptide is Hemoglobin subunit alpha-D (HBAD) (Phrynops hilarii (Snake-necked turtle)).